The primary structure comprises 314 residues: tRNA selenocysteine 1-associated protein 1 (314 aa).

2 RRM domains span residues 2–85 (NSLW…RSNY) and 94–173 (FSLF…LASS).

This sequence belongs to the RRM TRSPAP family.

It localises to the nucleus. The protein resides in the cytoplasm. In terms of biological role, involved in the early steps of selenocysteine biosynthesis and tRNA(Sec) charging to the later steps resulting in the cotranslational incorporation of selenocysteine into selenoproteins. This Danio rerio (Zebrafish) protein is tRNA selenocysteine 1-associated protein 1.